The chain runs to 448 residues: Proton extrusion protein PxcA (448 aa).

4 consecutive transmembrane segments (helical) span residues 231 to 251 (ILLL…FFLI), 323 to 343 (IDSI…VLVL), 372 to 392 (LIIL…WEVI), and 408 to 428 (FNFL…KYWI).

This sequence belongs to the CemA family.

The protein localises to the cell inner membrane. In terms of biological role, required for H(+) efflux immediately after light irradiation to form a rapid H(+) concentration gradient across the thylakoid membranes. Together with PxcL, contributes to transient H(+) uptake following dark to light transition. The polypeptide is Proton extrusion protein PxcA (Rippkaea orientalis (strain PCC 8801 / RF-1) (Cyanothece sp. (strain PCC 8801))).